The sequence spans 465 residues: Serine/threonine-protein kinase 38 (465 aa).

Position 2 is an N-acetylalanine (Ala2). The segment at 62 to 87 (KRLRRSAHARKETEFLRLKRTRLGLE) is interaction with S100B. Thr74 carries the post-translational modification Phosphothreonine. In terms of domain architecture, Protein kinase spans 89–382 (FESLKVIGRG…VEEIKSNSFF (294 aa)). ATP contacts are provided by residues 95 to 103 (IGRGAFGEV) and Lys118. Residue Asp212 is the Proton acceptor of the active site. Position 264 is a phosphoserine (Ser264). Residue Ser281 is modified to Phosphoserine; by autocatalysis. The UFM1-interacting motif (UFIM) signature appears at 306-311 (WSLGVI). The AGC-kinase C-terminal domain occupies 383–455 (EGVDWEHIRE…KRFEGLTARG (73 aa)). Position 444 is a phosphothreonine; by STK24/MST3 (Thr444).

Belongs to the protein kinase superfamily. AGC Ser/Thr protein kinase family. In terms of assembly, homodimeric S100B binds two molecules of STK38. Interacts with MOB1 and MOB2. Interacts with MAP3K1 and MAP3K2 (via the kinase catalytic domain). Forms a tripartite complex with MOBKL1B and STK3/MST2. Interacts with MICAL1; leading to inhibit the protein kinase activity by antagonizing activation by MST1/STK4. Requires Mg(2+) as cofactor. ISGylated. In terms of processing, phosphorylated by STK3/MST2 and this is enhanced by MOBKL1B. In terms of tissue distribution, ubiquitously expressed with highest levels observed in peripheral blood leukocytes.

It localises to the nucleus. Its subcellular location is the cytoplasm. The protein localises to the chromosome. The enzyme catalyses L-seryl-[protein] + ATP = O-phospho-L-seryl-[protein] + ADP + H(+). It carries out the reaction L-threonyl-[protein] + ATP = O-phospho-L-threonyl-[protein] + ADP + H(+). Its activity is regulated as follows. Activated by binding of S100B which releases autoinhibitory N-lobe interactions, enabling ATP to bind and the autophosphorylation of Ser-281. Thr-444 then undergoes calcium-dependent phosphorylation by STK24/MST3. Interactions between phosphorylated Thr-444 and the N-lobe promote additional structural changes that complete the activation of the kinase. Autoinhibition is also released by the binding of MOB1/MOBKL1A and MOB2/HCCA2 to the N-terminal of STK38. Serine/threonine-protein kinase that acts as a negative regulator of MAP3K1/2 signaling. Converts MAP3K2 from its phosphorylated form to its non-phosphorylated form and inhibits autophosphorylation of MAP3K2. Acts as an ufmylation 'reader' in a kinase-independent manner: specifically recognizes and binds mono-ufmylated histone H4 in response to DNA damage, promoting the recruitment of SUV39H1 to the double-strand breaks, resulting in ATM activation. This chain is Serine/threonine-protein kinase 38, found in Homo sapiens (Human).